A 483-amino-acid polypeptide reads, in one-letter code: Glutamate--tRNA ligase (483 aa).

A 'HIGH' region motif is present at residues 11–21 (PSPTGLLHIGN). A 'KMSKS' region motif is present at residues 255–259 (KLSKR). Lys258 lines the ATP pocket.

This sequence belongs to the class-I aminoacyl-tRNA synthetase family. Glutamate--tRNA ligase type 1 subfamily. Monomer.

Its subcellular location is the cytoplasm. It catalyses the reaction tRNA(Glu) + L-glutamate + ATP = L-glutamyl-tRNA(Glu) + AMP + diphosphate. Functionally, catalyzes the attachment of glutamate to tRNA(Glu) in a two-step reaction: glutamate is first activated by ATP to form Glu-AMP and then transferred to the acceptor end of tRNA(Glu). This chain is Glutamate--tRNA ligase, found in Lactococcus lactis subsp. lactis (strain IL1403) (Streptococcus lactis).